The sequence spans 372 residues: Protein-glutamate methylesterase/protein-glutamine glutaminase (372 aa).

The Response regulatory domain occupies 5–123 (RVLIVDDSAL…SANLTTVSET (119 aa)). The residue at position 56 (Asp-56) is a 4-aspartylphosphate. Positions 140–151 (GTRSTDTTNSFS) are enriched in polar residues. Residues 140–177 (GTRSTDTTNSFSEPFKSTIPKPMTAAEPQKEEKPTPQR) are disordered. Positions 167-177 (PQKEEKPTPQR) are enriched in basic and acidic residues. The region spanning 178-364 (EHGNIQIIAI…VSLDNMAAAI (187 aa)) is the CheB-type methylesterase domain. Residues Ser-190, His-217, and Asp-313 contribute to the active site.

The protein belongs to the CheB family. In terms of processing, phosphorylated by CheA. Phosphorylation of the N-terminal regulatory domain activates the methylesterase activity.

It localises to the cytoplasm. The catalysed reaction is [protein]-L-glutamate 5-O-methyl ester + H2O = L-glutamyl-[protein] + methanol + H(+). It carries out the reaction L-glutaminyl-[protein] + H2O = L-glutamyl-[protein] + NH4(+). Involved in chemotaxis. Part of a chemotaxis signal transduction system that modulates chemotaxis in response to various stimuli. Catalyzes the demethylation of specific methylglutamate residues introduced into the chemoreceptors (methyl-accepting chemotaxis proteins or MCP) by CheR. Also mediates the irreversible deamidation of specific glutamine residues to glutamic acid. The polypeptide is Protein-glutamate methylesterase/protein-glutamine glutaminase (Treponema denticola (strain ATCC 35405 / DSM 14222 / CIP 103919 / JCM 8153 / KCTC 15104)).